The sequence spans 227 residues: Cytochrome c oxidase subunit 2 (227 aa).

Residues 1-14 (MAYPMQLGFQDATS) are Mitochondrial intermembrane-facing. A helical membrane pass occupies residues 15 to 45 (PIMEELLHFHDHTLMIVFLISSLVLYIISLM). Residues 46–59 (LTTKLTHTSTMDAQ) are Mitochondrial matrix-facing. Residues 60-87 (EVETVWTILPAIILILIALPSLRILYMM) traverse the membrane as a helical segment. Residues 88–227 (DEINNPSLTV…HFEEWSASMS (140 aa)) are Mitochondrial intermembrane-facing. Positions 161, 196, 198, 200, 204, and 207 each coordinate Cu cation. E198 lines the Mg(2+) pocket.

The protein belongs to the cytochrome c oxidase subunit 2 family. Component of the cytochrome c oxidase (complex IV, CIV), a multisubunit enzyme composed of 14 subunits. The complex is composed of a catalytic core of 3 subunits MT-CO1, MT-CO2 and MT-CO3, encoded in the mitochondrial DNA, and 11 supernumerary subunits COX4I, COX5A, COX5B, COX6A, COX6B, COX6C, COX7A, COX7B, COX7C, COX8 and NDUFA4, which are encoded in the nuclear genome. The complex exists as a monomer or a dimer and forms supercomplexes (SCs) in the inner mitochondrial membrane with NADH-ubiquinone oxidoreductase (complex I, CI) and ubiquinol-cytochrome c oxidoreductase (cytochrome b-c1 complex, complex III, CIII), resulting in different assemblies (supercomplex SCI(1)III(2)IV(1) and megacomplex MCI(2)III(2)IV(2)). Found in a complex with TMEM177, COA6, COX18, COX20, SCO1 and SCO2. Interacts with TMEM177 in a COX20-dependent manner. Interacts with COX20. Interacts with COX16. Cu cation serves as cofactor.

The protein resides in the mitochondrion inner membrane. The enzyme catalyses 4 Fe(II)-[cytochrome c] + O2 + 8 H(+)(in) = 4 Fe(III)-[cytochrome c] + 2 H2O + 4 H(+)(out). Functionally, component of the cytochrome c oxidase, the last enzyme in the mitochondrial electron transport chain which drives oxidative phosphorylation. The respiratory chain contains 3 multisubunit complexes succinate dehydrogenase (complex II, CII), ubiquinol-cytochrome c oxidoreductase (cytochrome b-c1 complex, complex III, CIII) and cytochrome c oxidase (complex IV, CIV), that cooperate to transfer electrons derived from NADH and succinate to molecular oxygen, creating an electrochemical gradient over the inner membrane that drives transmembrane transport and the ATP synthase. Cytochrome c oxidase is the component of the respiratory chain that catalyzes the reduction of oxygen to water. Electrons originating from reduced cytochrome c in the intermembrane space (IMS) are transferred via the dinuclear copper A center (CU(A)) of subunit 2 and heme A of subunit 1 to the active site in subunit 1, a binuclear center (BNC) formed by heme A3 and copper B (CU(B)). The BNC reduces molecular oxygen to 2 water molecules using 4 electrons from cytochrome c in the IMS and 4 protons from the mitochondrial matrix. The sequence is that of Cytochrome c oxidase subunit 2 (MT-CO2) from Antilocapra americana (Pronghorn).